Here is a 352-residue protein sequence, read N- to C-terminus: Galactokinase (352 aa).

Residue 14–17 coordinates substrate; it reads EHTD. Residues S46 and 96-102 contribute to the ATP site; that span reads GAGLSSS. Mg(2+)-binding residues include S102 and E134. D146 acts as the Proton acceptor in catalysis. Y196 provides a ligand contact to substrate.

The protein belongs to the GHMP kinase family. GalK subfamily.

It is found in the cytoplasm. The enzyme catalyses alpha-D-galactose + ATP = alpha-D-galactose 1-phosphate + ADP + H(+). The protein operates within carbohydrate metabolism; galactose metabolism. In terms of biological role, catalyzes the transfer of the gamma-phosphate of ATP to D-galactose to form alpha-D-galactose-1-phosphate (Gal-1-P). The chain is Galactokinase from Thermosipho africanus (strain TCF52B).